Here is a 569-residue protein sequence, read N- to C-terminus: Urease subunit alpha (569 aa).

One can recognise a Urease domain in the interval 131–569 (GGIDTHIHFI…LPLAQRYLLL (439 aa)). The Ni(2+) site is built by His-136, His-138, and Lys-219. Lys-219 carries the post-translational modification N6-carboxylysine. His-221 contributes to the substrate binding site. Ni(2+) is bound by residues His-248 and His-274. His-322 serves as the catalytic Proton donor. Asp-362 contacts Ni(2+).

The protein belongs to the metallo-dependent hydrolases superfamily. Urease alpha subunit family. In terms of assembly, heterotrimer of UreA (gamma), UreB (beta) and UreC (alpha) subunits. Three heterotrimers associate to form the active enzyme. It depends on Ni cation as a cofactor. In terms of processing, carboxylation allows a single lysine to coordinate two nickel ions.

Its subcellular location is the cytoplasm. It catalyses the reaction urea + 2 H2O + H(+) = hydrogencarbonate + 2 NH4(+). The protein operates within nitrogen metabolism; urea degradation; CO(2) and NH(3) from urea (urease route): step 1/1. This chain is Urease subunit alpha, found in Synechococcus sp. (strain WH7805).